A 124-amino-acid chain; its full sequence is Small ribosomal subunit protein uS12 (124 aa).

The residue at position 89 (Asp-89) is a 3-methylthioaspartic acid.

This sequence belongs to the universal ribosomal protein uS12 family. In terms of assembly, part of the 30S ribosomal subunit. Contacts proteins S8 and S17. May interact with IF1 in the 30S initiation complex.

Its function is as follows. With S4 and S5 plays an important role in translational accuracy. Functionally, interacts with and stabilizes bases of the 16S rRNA that are involved in tRNA selection in the A site and with the mRNA backbone. Located at the interface of the 30S and 50S subunits, it traverses the body of the 30S subunit contacting proteins on the other side and probably holding the rRNA structure together. The combined cluster of proteins S8, S12 and S17 appears to hold together the shoulder and platform of the 30S subunit. This Klebsiella pneumoniae (strain 342) protein is Small ribosomal subunit protein uS12.